Consider the following 473-residue polypeptide: Knob-associated histidine-rich protein (473 aa).

Positions 1–34 are cleaved as a signal peptide; it reads MKSFKNKNTLRRKKAFPVFTKILLVSFLVWVLKC. N-linked (GlcNAc...) asparagine glycosylation occurs at Asn42. Residues 57–87 show a composition bias toward basic residues; it reads AQKQHEHHHHHHHQHQHQHQAPHQAHHHHHH. Disordered regions lie at residues 57 to 143 and 347 to 473; these read AQKQ…QVFR and SSVN…DGSK. The segment covering 95–104 has biased composition (low complexity); that stretch reads PQVHQQVHGQ. Residues 108–117 show a composition bias toward basic residues; the sequence is HHHHHHHHHQ. Basic and acidic residues-rich tracts occupy residues 354-375 and 396-405; these read KHGD…EGEK and KDNEDAESVK. The segment covering 406 to 422 has biased composition (basic residues); it reads SKKHKSHDCEKKKSKKH. Composition is skewed to basic and acidic residues over residues 423–444 and 453–473; these read KDNE…GEKH and KTNE…DGSK.

Its subcellular location is the secreted. Its function is as follows. KAHRP might mimick human histidine-rich glycoproteins to anchor host thrombospondin or a parasite analog in a binding complex with the endothelial cell receptor. The sequence is that of Knob-associated histidine-rich protein from Plasmodium falciparum.